Here is a 500-residue protein sequence, read N- to C-terminus: NAD(P)H-quinone oxidoreductase chain 4, chloroplastic (500 aa).

14 consecutive transmembrane segments (helical) span residues 4–24, 37–57, 87–107, 113–130, 134–154, 167–187, 207–227, 242–262, 272–292, 305–325, 330–350, 386–406, 411–431, and 462–482; these read FPWL…IFFL, ICIC…HFQL, IGPI…AWPV, LFHF…GSFS, LLLF…LLSM, FILY…GIGL, IALE…KSPI, HYST…YGLV, AHSL…IYAA, IAYS…SITD, GAIL…FLAG, LALP…GIIT, FLMA…LTPI, and LFVS…PDFL.

It belongs to the complex I subunit 4 family.

Its subcellular location is the plastid. It is found in the chloroplast thylakoid membrane. The catalysed reaction is a plastoquinone + NADH + (n+1) H(+)(in) = a plastoquinol + NAD(+) + n H(+)(out). The enzyme catalyses a plastoquinone + NADPH + (n+1) H(+)(in) = a plastoquinol + NADP(+) + n H(+)(out). In Carica papaya (Papaya), this protein is NAD(P)H-quinone oxidoreductase chain 4, chloroplastic.